The sequence spans 490 residues: ATP synthase subunit beta, chloroplastic (490 aa).

169-176 (GGAGVGKT) lines the ATP pocket.

Belongs to the ATPase alpha/beta chains family. As to quaternary structure, F-type ATPases have 2 components, CF(1) - the catalytic core - and CF(0) - the membrane proton channel. CF(1) has five subunits: alpha(3), beta(3), gamma(1), delta(1), epsilon(1). CF(0) has four main subunits: a(1), b(1), b'(1) and c(9-12).

Its subcellular location is the plastid. The protein localises to the chloroplast thylakoid membrane. It carries out the reaction ATP + H2O + 4 H(+)(in) = ADP + phosphate + 5 H(+)(out). Functionally, produces ATP from ADP in the presence of a proton gradient across the membrane. The catalytic sites are hosted primarily by the beta subunits. The protein is ATP synthase subunit beta, chloroplastic of Cyanidium caldarium (Red alga).